The chain runs to 341 residues: Delta(1)-pyrroline-2-carboxylate/Delta(1)-piperideine-2-carboxylate reductase (341 aa).

Ser-52 acts as the Charge relay system in catalysis. Residue His-53 is the Proton donor of the active site. Residue Arg-57 coordinates substrate. 125-129 (HFAAL) contacts NADP(+). Thr-165 contacts substrate. 183-185 (DMA) lines the NADP(+) pocket. 191–192 (HG) is a binding site for substrate. Catalysis depends on Asp-193, which acts as the Charge relay system. NADP(+) is bound by residues 235 to 236 (HK) and 308 to 314 (RMPGERR).

Belongs to the LDH2/MDH2 oxidoreductase family. As to quaternary structure, homodimer.

It carries out the reaction L-pipecolate + NADP(+) = Delta(1)-piperideine-2-carboxylate + NADPH + H(+). It catalyses the reaction L-proline + NADP(+) = 1-pyrroline-2-carboxylate + NADPH + H(+). The enzyme catalyses N-methyl-L-alanine + NADP(+) + H2O = methylamine + pyruvate + NADPH + H(+). With respect to regulation, is inhibited by the substrate analog pyrrole-2-carboxylate, but not by N-formylphenylalanine. Functionally, catalyzes the reduction of both Delta(1)-pyrroline-2-carboxylate (Pyr2C) and Delta(1)-piperideine-2-carboxylate (Pip2C) to L-proline and L-pipecolate, respectively, using NADPH as the electron donor. Can use NADH instead of NADPH, although with much less efficiency. Plays an essential role in the catabolism of D-proline and D-lysine, which allows P.putida to grow on each of these amino-acids as a sole carbon source; D-lysine appears to be catabolized only through the pipecolate pathway. Can also catalyze the reverse oxidation reactions, albeit at a much lower rate. To a lesser extent, is able to catalyze in vitro the NADPH-dependent formation of N-alkyl-L-amino acids from the corresponding alpha-oxo acids and alkylamines, e.g. the formation of N-methylalanine from pyruvate and N-methylamine; cannot use ammonia as substrate for these reductive amination reactions. Shows neither malate dehydrogenase nor lactate dehydrogenase activity. The sequence is that of Delta(1)-pyrroline-2-carboxylate/Delta(1)-piperideine-2-carboxylate reductase from Pseudomonas putida (Arthrobacter siderocapsulatus).